We begin with the raw amino-acid sequence, 284 residues long: Chaperone protein dnaJ 6 (284 aa).

Disordered stretches follow at residues 1 to 30 (MGRK…ETSL), 196 to 221 (NKIS…AKDS), and 252 to 284 (GGDA…SRGK). Positions 3–6 (RKKK) match the Nuclear localization signal motif. Residues 29 to 94 (SLYEVLGVER…EKRAVYDQTG (66 aa)) form the J domain. The short motif at 209–215 (RKRKKKK) is the Nuclear localization signal element. Residues 255-265 (AEAEPTEEEFE) are compositionally biased toward acidic residues. A compositionally biased stretch (basic and acidic residues) spans 266 to 275 (AAQRRIESKR).

Belongs to the DnaJ family. C/III subfamily. In terms of tissue distribution, highly expressed in leaves, flowers and siliques, and to lower extent in roots.

Its subcellular location is the nucleus. In terms of biological role, plays a continuous role in plant development probably in the structural organization of compartments. This chain is Chaperone protein dnaJ 6 (ATJ6), found in Arabidopsis thaliana (Mouse-ear cress).